Here is a 621-residue protein sequence, read N- to C-terminus: DNA-directed RNA polymerase subunit gamma (621 aa).

3 residues coordinate Mg(2+): Asp-463, Asp-465, and Asp-467.

Belongs to the RNA polymerase beta' chain family. RpoC1 subfamily. As to quaternary structure, in cyanobacteria the RNAP catalytic core is composed of 2 alpha, 1 beta, 1 beta', 1 gamma and 1 omega subunit. When a sigma factor is associated with the core the holoenzyme is formed, which can initiate transcription. Mg(2+) is required as a cofactor.

The enzyme catalyses RNA(n) + a ribonucleoside 5'-triphosphate = RNA(n+1) + diphosphate. Functionally, DNA-dependent RNA polymerase catalyzes the transcription of DNA into RNA using the four ribonucleoside triphosphates as substrates. The polypeptide is DNA-directed RNA polymerase subunit gamma (Nostoc commune).